The primary structure comprises 279 residues: Protein ABIL4 (279 aa).

2 disordered regions span residues 192-211 (VHNN…PMRF) and 219-241 (LLKR…EPQR). Residues 194-208 (NNINNRTPNKRSNSP) are compositionally biased toward polar residues. Residues 219 to 228 (LLKRSSSPSQ) are compositionally biased toward low complexity.

The protein belongs to the ABI family. In terms of assembly, binds SCAR.

Its subcellular location is the cytoplasm. The protein localises to the cytoskeleton. In terms of biological role, involved in regulation of actin and microtubule organization. Part of a WAVE complex that activates the Arp2/3 complex. In Arabidopsis thaliana (Mouse-ear cress), this protein is Protein ABIL4 (ABIL4).